A 427-amino-acid chain; its full sequence is Serine--tRNA ligase (427 aa).

L-serine is bound at residue 232-234 (TAE). 263–265 (RSE) is an ATP binding site. E286 is a binding site for L-serine. 350–353 (EISS) lines the ATP pocket. Position 385 (S385) interacts with L-serine.

Belongs to the class-II aminoacyl-tRNA synthetase family. Type-1 seryl-tRNA synthetase subfamily. Homodimer. The tRNA molecule binds across the dimer.

The protein resides in the cytoplasm. The enzyme catalyses tRNA(Ser) + L-serine + ATP = L-seryl-tRNA(Ser) + AMP + diphosphate + H(+). It carries out the reaction tRNA(Sec) + L-serine + ATP = L-seryl-tRNA(Sec) + AMP + diphosphate + H(+). Its pathway is aminoacyl-tRNA biosynthesis; selenocysteinyl-tRNA(Sec) biosynthesis; L-seryl-tRNA(Sec) from L-serine and tRNA(Sec): step 1/1. Catalyzes the attachment of serine to tRNA(Ser). Is also able to aminoacylate tRNA(Sec) with serine, to form the misacylated tRNA L-seryl-tRNA(Sec), which will be further converted into selenocysteinyl-tRNA(Sec). The chain is Serine--tRNA ligase from Lacticaseibacillus paracasei (strain ATCC 334 / BCRC 17002 / CCUG 31169 / CIP 107868 / KCTC 3260 / NRRL B-441) (Lactobacillus paracasei).